Consider the following 1137-residue polypeptide: Voltage-dependent calcium channel subunit alpha-2/delta-4 (1137 aa).

A signal peptide spans 1 to 19 (MVCGCSALLPLPNPRPTMP). The Extracellular portion of the chain corresponds to 20–1115 (ATPNFLANPS…AQDCGGASDT (1096 aa)). Residue Asn201 is glycosylated (N-linked (GlcNAc...) asparagine). In terms of domain architecture, VWFA spans 291-473 (DIVILVDVSG…ENVMEYLHVL (183 aa)). Asp297, Ser299, and Ser301 together coordinate a divalent metal cation. Residues 297 to 301 (DVSGS) carry the MIDAS-like motif motif. Cys447 and Cys1097 are oxidised to a cystine. A Cache domain is found at 487–580 (WTEAYMDSKL…RPLYREGKKL (94 aa)). Asn664 carries N-linked (GlcNAc...) asparagine glycosylation. Residues 1116–1136 (SASPPLLLLPVCAWGLLPQLL) traverse the membrane as a helical segment. Arg1137 is a topological domain (cytoplasmic).

It belongs to the calcium channel subunit alpha-2/delta family. As to quaternary structure, dimer formed of alpha-2-2 and delta-2 chains; disulfide-linked. Voltage-dependent calcium channels are multisubunit complexes, consisting of alpha-1 (CACNA1), alpha-2 (CACNA2D), beta (CACNB) and delta (CACNA2D) subunits in a 1:1:1:1 ratio. Interacts with CACNA1C and CACNB3. May be proteolytically processed into subunits alpha-2-4 and delta-4 that are disulfide-linked. It is however unclear whether such cleavage really takes place in vivo and has a functional role. As to expression, predominantly expressed in certain types of endocrine cells. Present in the Paneth cells of the small intestine. Also present in the erythroblasts in the fetal liver, in the cells of the zona reticularis of the adrenal gland and in the basophils of the pituitary. Present at low level in some brain regions such as the cerebellum (at protein level).

The protein localises to the membrane. Functionally, the alpha-2/delta subunit of voltage-dependent calcium channels regulates calcium current density and activation/inactivation kinetics of the calcium channel. This Homo sapiens (Human) protein is Voltage-dependent calcium channel subunit alpha-2/delta-4 (CACNA2D4).